The sequence spans 168 residues: Venom nerve growth factor (168 aa).

Residues 1 to 18 (MSMLCYTLIIAFLIGIWA) form the signal peptide. A propeptide spanning residues 19 to 123 (APKSEDNVSL…ADSLNRNIRA (105 aa)) is cleaved from the precursor. The N-linked (GlcNAc...) asparagine glycan is linked to asparagine 25. The tract at residues 48–70 (LKTSQNTDQHSPAPKKAEDQEFG) is disordered. Residue asparagine 148 is glycosylated (N-linked (GlcNAc...) asparagine).

Belongs to the NGF-beta family. In terms of assembly, homodimer; non-covalently linked. Expressed by the venom gland.

It is found in the secreted. Its function is as follows. Nerve growth factor is important for the development and maintenance of the sympathetic and sensory nervous systems. It stimulates division and differentiation of sympathetic and embryonic sensory neurons as well as basal forebrain cholinergic neurons in the brain. Its relevance in the snake venom is not clear. However, it has been shown to inhibit metalloproteinase-dependent proteolysis of platelet glycoprotein Ib alpha, suggesting a metalloproteinase inhibition to prevent metalloprotease autodigestion and/or protection against prey proteases. In Echis ocellatus (Ocellated saw-scaled viper), this protein is Venom nerve growth factor.